The sequence spans 294 residues: MHSRFQAALTTLAADLQAAIAPMLADPHFPALLEADQVATLQHATGLDEDALAFALLPLAAACARPDLSHFNVGAIARGVSGRWYFGGNMEFLGATMQQTVHAEQSAISHAWLRGETSLRAITVNYTPCGHCRQFMNELNSGLALRIHLPGREAHALEHYLPDAFGPKDLEIKTLLMDEQDHGFPVSGDALTQAAIQAANRCHAPYSHSPSGVALELKDGTIFSGSYAENAAFNPTLPPLQGALNLLSLNGYDYPAIQRAILAEKADAALIQWDATVATLKALGCHNIERVLLG.

2 consecutive CMP/dCMP-type deaminase domains span residues 48-168 (DEDA…FGPK) and 186-294 (VSGD…VLLG). Residue 89-91 (NME) participates in substrate binding. Zn(2+) is bound at residue His-102. Residue Glu-104 is the Proton donor of the active site. 2 residues coordinate Zn(2+): Cys-129 and Cys-132.

This sequence belongs to the cytidine and deoxycytidylate deaminase family. As to quaternary structure, homodimer. Requires Zn(2+) as cofactor.

It carries out the reaction cytidine + H2O + H(+) = uridine + NH4(+). The catalysed reaction is 2'-deoxycytidine + H2O + H(+) = 2'-deoxyuridine + NH4(+). Its function is as follows. This enzyme scavenges exogenous and endogenous cytidine and 2'-deoxycytidine for UMP synthesis. The sequence is that of Cytidine deaminase from Klebsiella pneumoniae subsp. pneumoniae (strain ATCC 700721 / MGH 78578).